We begin with the raw amino-acid sequence, 256 residues long: Glutamate racemase (256 aa).

Substrate is bound by residues 12 to 13 (DS) and 44 to 45 (YG). Cys75 serves as the catalytic Proton donor/acceptor. 76–77 (NT) provides a ligand contact to substrate. Cys186 (proton donor/acceptor) is an active-site residue. 187–188 (TH) contacts substrate.

This sequence belongs to the aspartate/glutamate racemases family.

The enzyme catalyses L-glutamate = D-glutamate. Its pathway is cell wall biogenesis; peptidoglycan biosynthesis. Functionally, provides the (R)-glutamate required for cell wall biosynthesis. The chain is Glutamate racemase from Clostridium acetobutylicum (strain ATCC 824 / DSM 792 / JCM 1419 / IAM 19013 / LMG 5710 / NBRC 13948 / NRRL B-527 / VKM B-1787 / 2291 / W).